Reading from the N-terminus, the 218-residue chain is Protein-L-isoaspartate O-methyltransferase (218 aa).

Residue S60 is part of the active site.

The protein belongs to the methyltransferase superfamily. L-isoaspartyl/D-aspartyl protein methyltransferase family.

It is found in the cytoplasm. It carries out the reaction [protein]-L-isoaspartate + S-adenosyl-L-methionine = [protein]-L-isoaspartate alpha-methyl ester + S-adenosyl-L-homocysteine. Its function is as follows. Catalyzes the methyl esterification of L-isoaspartyl residues in peptides and proteins that result from spontaneous decomposition of normal L-aspartyl and L-asparaginyl residues. It plays a role in the repair and/or degradation of damaged proteins. In Roseiflexus sp. (strain RS-1), this protein is Protein-L-isoaspartate O-methyltransferase.